Consider the following 947-residue polypeptide: Bifunctional glutamine synthetase adenylyltransferase/adenylyl-removing enzyme (947 aa).

The tract at residues 1–440 (MTPLSSPLSQ…VFNELIGDDE (440 aa)) is adenylyl removase. The adenylyl transferase stretch occupies residues 450-947 (SEPWREVWQD…ASWRKWLVAV (498 aa)).

Belongs to the GlnE family. Requires Mg(2+) as cofactor.

The enzyme catalyses [glutamine synthetase]-O(4)-(5'-adenylyl)-L-tyrosine + phosphate = [glutamine synthetase]-L-tyrosine + ADP. It carries out the reaction [glutamine synthetase]-L-tyrosine + ATP = [glutamine synthetase]-O(4)-(5'-adenylyl)-L-tyrosine + diphosphate. In terms of biological role, involved in the regulation of glutamine synthetase GlnA, a key enzyme in the process to assimilate ammonia. When cellular nitrogen levels are high, the C-terminal adenylyl transferase (AT) inactivates GlnA by covalent transfer of an adenylyl group from ATP to specific tyrosine residue of GlnA, thus reducing its activity. Conversely, when nitrogen levels are low, the N-terminal adenylyl removase (AR) activates GlnA by removing the adenylyl group by phosphorolysis, increasing its activity. The regulatory region of GlnE binds the signal transduction protein PII (GlnB) which indicates the nitrogen status of the cell. The polypeptide is Bifunctional glutamine synthetase adenylyltransferase/adenylyl-removing enzyme (Salmonella enteritidis PT4 (strain P125109)).